The chain runs to 1040 residues: Multidrug resistance protein MdtB (1040 aa).

12 helical membrane passes run 25-45 (LLMA…PVAA), 347-367 (LMLA…NIPA), 369-389 (IIPG…MVFL), 396-416 (LTLM…IVVI), 440-460 (IGFT…PLLF), 472-492 (FAVT…TLTP), 537-557 (WLTL…WIVI), 869-889 (LIVA…ESFI), 890-910 (HPIT…LALM), 911-931 (IAGS…IGIV), 968-988 (ILMT…STGV), and 998-1018 (IAMV…TPVI).

This sequence belongs to the resistance-nodulation-cell division (RND) (TC 2.A.6) family. MdtB subfamily. Part of a tripartite efflux system composed of MdtA, MdtB and MdtC. MdtB forms a heteromultimer with MdtC.

Its subcellular location is the cell inner membrane. In Salmonella arizonae (strain ATCC BAA-731 / CDC346-86 / RSK2980), this protein is Multidrug resistance protein MdtB.